The chain runs to 325 residues: Anthranilate phosphoribosyltransferase (325 aa).

5-phospho-alpha-D-ribose 1-diphosphate is bound by residues G74, 77–78 (GD), T82, 84–87 (NVST), 101–109 (KHGNVSITS), and S113. G74 is an anthranilate binding site. S86 provides a ligand contact to Mg(2+). N104 provides a ligand contact to anthranilate. An anthranilate-binding site is contributed by R159. Positions 217 and 218 each coordinate Mg(2+).

This sequence belongs to the anthranilate phosphoribosyltransferase family. Homodimer. Mg(2+) serves as cofactor.

It catalyses the reaction N-(5-phospho-beta-D-ribosyl)anthranilate + diphosphate = 5-phospho-alpha-D-ribose 1-diphosphate + anthranilate. The protein operates within amino-acid biosynthesis; L-tryptophan biosynthesis; L-tryptophan from chorismate: step 2/5. Catalyzes the transfer of the phosphoribosyl group of 5-phosphorylribose-1-pyrophosphate (PRPP) to anthranilate to yield N-(5'-phosphoribosyl)-anthranilate (PRA). The sequence is that of Anthranilate phosphoribosyltransferase from Thermococcus kodakarensis (strain ATCC BAA-918 / JCM 12380 / KOD1) (Pyrococcus kodakaraensis (strain KOD1)).